A 326-amino-acid chain; its full sequence is Probable cell division protein WhiA (326 aa).

The H-T-H motif DNA-binding region spans 275-308 (SLDELGRLADPPMTKDAIAGRIRRLLAMADKRAL).

The protein belongs to the WhiA family.

Involved in cell division and chromosome segregation. The chain is Probable cell division protein WhiA from Paenarthrobacter aurescens (strain TC1).